Reading from the N-terminus, the 344-residue chain is Transmembrane protein 268 (344 aa).

Residues 1-31 (MACEPQMDPGGAAGPLPTSSPGWSPLPGGSP) form a disordered region. The segment covering 14 to 27 (GPLPTSSPGWSPLP) has biased composition (low complexity). A run of 2 helical transmembrane segments spans residues 106–126 (AFAV…SQMF) and 133–153 (AGVL…VVIF). A disordered region spans residues 244–266 (TANEGPENLLEETPLLPDRPGST). Positions 247–259 (EGPENLLEETPLL) are enriched in low complexity.

In terms of assembly, interacts with ITGAM; this interaction inhibits ITGAM degradation via the endosome-lysosome pathway. Interacts with ITGB4; this interaction prevents ITGB4 degradation.

The protein resides in the cell membrane. Functionally, stabilizes cell surface expression of ITGAM and participates in the adhesion and migration of phagocytes during bacterial clearance. The protein is Transmembrane protein 268 (TMEM268) of Bos taurus (Bovine).